Here is a 131-residue protein sequence, read N- to C-terminus: MSWQTYVDDHLMCDIDGHRLTAAAIIGHDGSVWAQSSSFPQFKSDEVAAVMKDFDEPGSLAPTGLHLGGTKYMVIQGEPGAVIRGKKGSGGITVKKTGQALIIGIYDEPLTPGQCNMIVERLGDYLLDQGL.

This sequence belongs to the profilin family. As to quaternary structure, occurs in many kinds of cells as a complex with monomeric actin in a 1:1 ratio.

Its subcellular location is the cytoplasm. The protein resides in the cytoskeleton. Binds to actin and affects the structure of the cytoskeleton. At high concentrations, profilin prevents the polymerization of actin, whereas it enhances it at low concentrations. By binding to PIP2, it inhibits the formation of IP3 and DG. The protein is Profilin-6 of Hevea brasiliensis (Para rubber tree).